Reading from the N-terminus, the 368-residue chain is Endophilin-A2 (368 aa).

Residues 1–21 (MSVAGLKKQFYKASQLVSEKV) form a membrane-binding amphipathic helix region. In terms of domain architecture, BAR spans 18 to 249 (SEKVGGAEGT…LKRRMREASS (232 aa)). Residues 60–87 (PNPASRAKLTMLNTVSKIRGQVKNPGYP) are required for dimerization upon membrane association. Positions 181 to 250 (EELRQAMEKF…KRRMREASSR (70 aa)) form a coiled coil. The segment at 218–254 (LVDAQLDYHRQAVQILDELADKLKRRMREASSRPKRE) is interaction with ARC. Residues 243–308 (RMREASSRPK…PSRSMPPLDQ (66 aa)) form a disordered region. The span at 245-263 (REASSRPKREYKPKPRELL) shows a compositional bias: basic and acidic residues. S288 and S292 each carry phosphoserine. T298 is subject to Phosphothreonine. In terms of domain architecture, SH3 spans 306–365 (LDQPSCKALYDFEPENDGELGFHEGDIITLTNQIDENWYEGMLDGQSGFFPLSYVEVLVP). Y315 is subject to Phosphotyrosine.

It belongs to the endophilin family. As to quaternary structure, interacts with ARC, SYNJ1 and DNM1. Interacts with PDCD6IP. Interacts with BIN2.

The protein resides in the cytoplasm. It localises to the early endosome membrane. It is found in the cell projection. Its subcellular location is the podosome. Its function is as follows. Implicated in endocytosis. May recruit other proteins to membranes with high curvature. This Bos taurus (Bovine) protein is Endophilin-A2.